Reading from the N-terminus, the 462-residue chain is Microspherule protein 1 (462 aa).

Met-1 carries the post-translational modification N-acetylmethionine. Residues 1–130 (MDKDSQGLLD…KSKQPLQVTK (130 aa)) form a disordered region. The residue at position 22 (Ser-22) is a Phosphoserine. Over residues 43–55 (PKRRSSSRFIKRK) the composition is skewed to basic residues. The residue at position 102 (Ser-102) is a Phosphoserine. Thr-103 carries the phosphothreonine modification. Residues 103–112 (TPVPPSPAPA) are compositionally biased toward pro residues. Position 108 is a phosphoserine (Ser-108). The short motif at 113–123 (PGLTKRVKKSK) is the Nuclear localization signal element. 2 positions are modified to N6-acetyllysine: Lys-123 and Lys-130. Ser-282 carries the post-translational modification Phosphoserine. Positions 301-335 (LEHELMVADRRQKREIRQLEQELHKWQVLVDSITG) form a coiled coil. The region spanning 363–419 (ITLGRATKDNQIDVDLSLEGPAWKISRKQGVIKLKNNGDFFIANEGRRPIYIDGRPV) is the FHA domain. Residues 389-396 (RKQGVIKL) carry the UBR5-degron motif.

Component of the chromatin remodeling INO80 complex; specifically part of a complex module associated with the N-terminus of INO80. Component of some MLL1/MLL complex, at least composed of the core components KMT2A/MLL1, ASH2L, HCFC1, WDR5 and RBBP5, as well as the facultative components BACC1, CHD8, E2F6, HSP70, INO80C, KANSL1, LAS1L, MAX, MCRS1, MGA, KAT8/MOF, PELP1, PHF20, PRP31, RING2, RUVB1/TIP49A, RUVB2/TIP49B, SENP3, TAF1, TAF4, TAF6, TAF7, TAF9 and TEX10. Component of the NSL complex at least composed of MOF/KAT8, KANSL1, KANSL2, KANSL3, MCRS1, PHF20, OGT1/OGT, WDR5 and HCFC1. Interacts with NOP2. Interacts with PINX1. Interacts with TERT. Interacts with CCDC85B. Interacts with DAXX. Interacts (via N-terminus) with FMR1 (via phosphorylated form). Interacts with FXR1 and FXR2. Interacts (via C-terminus) with NDE1 (via C-terminus); phosphorylation of NDE1 inhibits the interaction. Interacts (via C-terminus) with ZNF375. Interacts (via C-terminus) with active GTP-bound RHEB (via N-terminus) under conditions of high amino acid concentration; the interaction promotes mTORC1 complex activation by RHEB. Interacts (via N-terminus) with the mTORC1 complex; the interaction ensures mTORC1 activation by RHEB. Interacts with DYNC1I1; the interaction is required for the proper distribution of centriolar satellites. Interacts with TTBK2; the interaction is required for recruitment of TTBK2 to the mother centriole. Interacts with KIF2A; the interaction occurs during mitosis and facilitates chromosome alignment. In terms of assembly, (Microbial infection) Interacts with Herpes simplex virus ICP22. Ubiquitinated by UBR5 when not assembled in the INO80 complex, leading to its degradation: UBR5 recognizes and binds a degron that is not accessible when MCRS1 is part of the INO80 complex. In terms of processing, phosphorylated by AURKA on Ser-35 and/or Ser-36 during mitosis which is required for kinetochore fiber assembly and mitotic progression but not for spindle localization or for chromosome-induced microtuble aster formation. Also phosphorylated by AURKA on Ser-85 and/or Ser-87. Phosphorylated by TTK/MPS1 which enhances recruitment of KIF2A to the minus end of spindle microtubules and facilitates precise chromosome segregation. In terms of tissue distribution, detected in testis, and at lower levels in spleen, thymus, prostate, uterus, small intestine, colon and leukocytes.

Its subcellular location is the nucleus. It localises to the nucleolus. It is found in the cytoplasm. The protein localises to the cytoskeleton. The protein resides in the microtubule organizing center. Its subcellular location is the centrosome. It localises to the spindle pole. It is found in the chromosome. The protein localises to the centromere. The protein resides in the kinetochore. Its subcellular location is the lysosome. It localises to the centriolar satellite. Functionally, modulates the transcription repressor activity of DAXX by recruiting it to the nucleolus. As part of the NSL complex, may be involved in acetylation of nucleosomal histone H4 on several lysine residues. Putative regulatory component of the chromatin remodeling INO80 complex which is involved in transcriptional regulation, DNA replication and probably DNA repair. May also be an inhibitor of TERT telomerase activity. Binds to G-quadruplex structures in mRNA. Binds to RNA homomer poly(G) and poly(U). Maintains RHEB at the lysosome in its active GTP-bound form and prevents its interaction with the mTORC1 complex inhibitor TSC2, ensuring activation of the mTORC1 complex by RHEB. Stabilizes the minus ends of kinetochore fibers by protecting them from depolymerization, ensuring functional spindle assembly during mitosis. Following phosphorylation by TTK/MPS1, enhances recruitment of KIF2A to the minus ends of mitotic spindle microtubules which promotes chromosome alignment. Regulates the morphology of microtubule minus ends in mitotic spindle by maintaining them in a closed conformation characterized by the presence of an electron-dense cap. Regulates G2/M transition and spindle assembly during oocyte meiosis. Mediates histone modifications and transcriptional regulation in germinal vesicle oocytes which are required for meiotic progression. Also regulates microtubule nucleation and spindle assembly by activating aurora kinases during oocyte meiosis. Contributes to the establishment of centriolar satellites and also plays a role in primary cilium formation by recruiting TTBK2 to the mother centriole which is necessary for removal of the CP110 cap from the mother centriole, an early step in ciliogenesis. Required for epiblast development during early embryogenesis. Essential for cell viability. This Homo sapiens (Human) protein is Microspherule protein 1 (MCRS1).